The sequence spans 304 residues: GTPase Era (304 aa).

Positions 11–186 (YCGFIAIVGR…LRKGVHHFPE (176 aa)) constitute an Era-type G domain. The G1 stretch occupies residues 19 to 26 (GRPNVGKS). 19–26 (GRPNVGKS) lines the GTP pocket. The G2 stretch occupies residues 45-49 (QTTRH). The segment at 66–69 (DTPG) is G3. Residues 66 to 70 (DTPGL) and 128 to 131 (NKVD) contribute to the GTP site. Positions 128 to 131 (NKVD) are G4. The tract at residues 158 to 160 (ISA) is G5. The KH type-2 domain occupies 210-287 (TGEELPYSVT…HLELWVKVKS (78 aa)).

This sequence belongs to the TRAFAC class TrmE-Era-EngA-EngB-Septin-like GTPase superfamily. Era GTPase family. In terms of assembly, monomer.

It is found in the cytoplasm. It localises to the cell inner membrane. An essential GTPase that binds both GDP and GTP, with rapid nucleotide exchange. Plays a role in 16S rRNA processing and 30S ribosomal subunit biogenesis and possibly also in cell cycle regulation and energy metabolism. This chain is GTPase Era, found in Histophilus somni (strain 2336) (Haemophilus somnus).